The primary structure comprises 156 residues: Large ribosomal subunit protein uL23 (156 aa).

Basic and acidic residues predominate over residues 1–19 (MAPKAKKEAPAPPKAEAKA). The disordered stretch occupies residues 1–67 (MAPKAKKEAP…PKYPRKSAPR (67 aa)). A2 bears the N,N,N-trimethylalanine mark. A Glycyl lysine isopeptide (Lys-Gly) (interchain with G-Cter in SUMO2) cross-link involves residue K14. The segment covering 20 to 67 (KALKAKKAVLKGVHSHKKKKIRTSPTFRRPKTLRLRRQPKYPRKSAPR) has biased composition (basic residues). Residues 32–74 (VHSHKKKKIRTSPTFRRPKTLRLRRQPKYPRKSAPRRNKLDHY) are beta-like import receptor binding (BIB) domain. Residue R41 is modified to Citrulline. S43 is subject to Phosphoserine. T45 carries the post-translational modification Phosphothreonine. An N6-acetyllysine modification is found at K70.

This sequence belongs to the universal ribosomal protein uL23 family. Component of the large ribosomal subunit. Interacts with LYAR and GNL2. Interacts with MDM2; this interaction may promote MDM2-mediated p53/TP53 polyubiquitination. Directly interacts (via BIB domain) with IPO5, IPO7, KPNB1 and TNPO1; these interactions are involved in RPL23A nuclear import for the assembly of ribosomal subunits. Interacts with IPO8. N-terminus is methylated by METTL11A/NTM1. In terms of processing, citrullinated by PADI4.

It localises to the cytoplasm. Its subcellular location is the nucleus. Functionally, component of the large ribosomal subunit. The ribosome is a large ribonucleoprotein complex responsible for the synthesis of proteins in the cell. Binds a specific region on the 26S rRNA. May promote p53/TP53 degradation possibly through the stimulation of MDM2-mediated TP53 polyubiquitination. In Bos taurus (Bovine), this protein is Large ribosomal subunit protein uL23 (RPL23A).